The sequence spans 359 residues: Protein RecA (359 aa).

69-76 serves as a coordination point for ATP; that stretch reads GPESSGKT. Residues 337-359 form a disordered region; sequence SANSVAKASEEDEEEEVDLEPEE. A compositionally biased stretch (acidic residues) spans 346–359; it reads EEDEEEEVDLEPEE.

It belongs to the RecA family.

It localises to the cytoplasm. Functionally, can catalyze the hydrolysis of ATP in the presence of single-stranded DNA, the ATP-dependent uptake of single-stranded DNA by duplex DNA, and the ATP-dependent hybridization of homologous single-stranded DNAs. It interacts with LexA causing its activation and leading to its autocatalytic cleavage. The polypeptide is Protein RecA (Nostoc punctiforme (strain ATCC 29133 / PCC 73102)).